We begin with the raw amino-acid sequence, 205 residues long: SREBP regulating gene protein (205 aa).

Residues 1-16 lie on the Cytoplasmic side of the membrane; that stretch reads MALYVSMVWRKILRKR. A helical membrane pass occupies residues 17–35; the sequence is WVLGVVFGLSLIYFLTSTF. The Lumenal portion of the chain corresponds to 36–205; the sequence is KQEERTVRDR…GESPPELLPI (170 aa). Asn-67 carries N-linked (GlcNAc...) asparagine glycosylation.

The protein belongs to the SPRING family.

Its subcellular location is the golgi apparatus membrane. Its function is as follows. Positively regulates hepatic SREBP signaling pathway by modulating the proper localization of SCAP (SREBP cleavage-activating protein) to the endoplasmic reticulum, thereby controlling the level of functional SCAP. The sequence is that of SREBP regulating gene protein from Xenopus laevis (African clawed frog).